We begin with the raw amino-acid sequence, 278 residues long: Indole-3-glycerol phosphate synthase (278 aa).

The protein belongs to the TrpC family.

It carries out the reaction 1-(2-carboxyphenylamino)-1-deoxy-D-ribulose 5-phosphate + H(+) = (1S,2R)-1-C-(indol-3-yl)glycerol 3-phosphate + CO2 + H2O. Its pathway is amino-acid biosynthesis; L-tryptophan biosynthesis; L-tryptophan from chorismate: step 4/5. In Pseudomonas fluorescens (strain SBW25), this protein is Indole-3-glycerol phosphate synthase.